Here is a 447-residue protein sequence, read N- to C-terminus: Biotin carboxylase (447 aa).

One can recognise a Biotin carboxylation domain in the interval 1–447 (MKFDKILIAN…STSFVQEMNK (447 aa)). ATP-binding positions include Lys117, Lys159, 165 to 166 (GG), 201 to 204 (EKFI), and His209. The ATP-grasp domain maps to 121 to 318 (KETMQKAGVP…LLVEQIRIAQ (198 aa)). Lys238 is a binding site for hydrogencarbonate. ATP is bound by residues Glu276 and Glu289. Glu276, Glu289, and Asn291 together coordinate Mg(2+). Residues Glu276, Glu289, and Asn291 each coordinate Mn(2+). Hydrogencarbonate-binding residues include Arg293, Val296, and Arg339. Arg293 is a catalytic residue. Arg339 serves as a coordination point for biotin.

In terms of assembly, acetyl-CoA carboxylase is a heterohexamer of biotin carboxyl carrier protein, biotin carboxylase and the two subunits of carboxyl transferase in a 2:2 complex. Mg(2+) is required as a cofactor. The cofactor is Mn(2+).

The catalysed reaction is N(6)-biotinyl-L-lysyl-[protein] + hydrogencarbonate + ATP = N(6)-carboxybiotinyl-L-lysyl-[protein] + ADP + phosphate + H(+). Its pathway is lipid metabolism; malonyl-CoA biosynthesis; malonyl-CoA from acetyl-CoA: step 1/1. Functionally, this protein is a component of the acetyl coenzyme A carboxylase complex; first, biotin carboxylase catalyzes the carboxylation of the carrier protein and then the transcarboxylase transfers the carboxyl group to form malonyl-CoA. This is Biotin carboxylase (accC) from Nostoc sp. (strain PCC 7120 / SAG 25.82 / UTEX 2576).